Consider the following 354-residue polypeptide: 3'-5' exonuclease (354 aa).

The tract at residues 1–120 (MEKYLIKMPI…PSPEKEKPEK (120 aa)) is disordered. Over residues 36-50 (TKKDTPKELKDKENA) the composition is skewed to basic and acidic residues. A compositionally biased stretch (basic residues) spans 59 to 70 (TKGRPGRPAVKR). Basic and acidic residues predominate over residues 71-91 (KNLDNPDAKAEKKATEEENPP). Residues Ser-104, Ser-110, and Ser-112 each carry the phosphoserine modification. In terms of domain architecture, 3'-5' exonuclease spans 146–314 (VLQWVEKQKD…GQVIYRELER (169 aa)). Asp-163, Glu-165, and Asp-301 together coordinate Mg(2+).

This sequence belongs to the WRNexo family.

It is found in the nucleus. Its function is as follows. Has exonuclease activity on both single-stranded and duplex templates bearing overhangs, but not blunt ended duplex DNA, and cleaves in a 3'-5' direction. Essential for the formation of DNA replication focal centers. Has an important role in maintaining genome stability. The sequence is that of 3'-5' exonuclease from Drosophila yakuba (Fruit fly).